A 144-amino-acid polypeptide reads, in one-letter code: MADRLTQLQDAVNSLADQFCNAIGVLQQCGPPASFSNIQTAINKDQPANPTEEYAQLFAALIARTAKDIDVLIDSLPSEESTAALQAASLYKLEEENHEAATCLEDVVYRGDMLLEKIQSALADIAQSQLKTRSGSHSQSLPDS.

This sequence belongs to the Mediator complex subunit 21 family. In terms of assembly, component of the Mediator complex, which is composed of MED1, MED4, MED6, MED7, MED8, MED9, MED10, MED11, MED12, MED13, MED13L, MED14, MED15, MED16, MED17, MED18, MED19, MED20, MED21, MED22, MED23, MED24, MED25, MED26, MED27, MED29, MED30, MED31, CCNC, CDK8 and CDC2L6/CDK11. The MED12, MED13, CCNC and CDK8 subunits form a distinct module termed the CDK8 module. Mediator containing the CDK8 module is less active than Mediator lacking this module in supporting transcriptional activation. Individual preparations of the Mediator complex lacking one or more distinct subunits have been variously termed ARC, CRSP, DRIP, PC2, SMCC and TRAP. Interacts with PPARG. Interacts with THRA in a ligand-dependent fashion.

The protein localises to the nucleus. Component of the Mediator complex, a coactivator involved in the regulated transcription of nearly all RNA polymerase II-dependent genes. Mediator functions as a bridge to convey information from gene-specific regulatory proteins to the basal RNA polymerase II transcription machinery. Mediator is recruited to promoters by direct interactions with regulatory proteins and serves as a scaffold for the assembly of a functional preinitiation complex with RNA polymerase II and the general transcription factors. In Macaca fascicularis (Crab-eating macaque), this protein is Mediator of RNA polymerase II transcription subunit 21 (MED21).